Consider the following 1647-residue polypeptide: Putative RNA exonuclease pqe-1 (1647 aa).

Disordered stretches follow at residues 1–199 (MFNG…QVQN), 274–393 (QTPA…TSLP), 515–619 (MMQQ…KPVI), and 641–665 (QVKQ…PTAR). Low complexity-rich tracts occupy residues 30-64 (GPSQ…SGAS) and 99-131 (TQPQ…AAAA). The span at 143-170 (SREQGNAHQPTAGQIPQSSNQPAQQTHN) shows a compositional bias: polar residues. Low complexity-rich tracts occupy residues 274-297 (QTPA…NPQQ) and 515-526 (MMQQQAMQMQMQ). A compositionally biased stretch (pro residues) spans 527 to 540 (NPPPVHQQPPPQQP). A compositionally biased stretch (low complexity) spans 541–555 (PQQQRQKQQRSQPAP). Basic and acidic residues predominate over residues 592-601 (SKIEPVDVKP). Over residues 650 to 664 (SSTSDATKSDAAPTA) the composition is skewed to low complexity. Residues 686–726 (SAKKFERMKAEAEDKEDMKKKIAALQEALFNIQEERRVEKE) are a coiled coil. A compositionally biased stretch (polar residues) spans 736–756 (AVPQNQPASSVQIAQVSTSES). A disordered region spans residues 736-1174 (AVPQNQPASS…LRNKKHTTEE (439 aa)). A compositionally biased stretch (low complexity) spans 761 to 772 (TSEAAATETMTS). Residues 783 to 793 (TEGEQEEDEDE) show a composition bias toward acidic residues. A compositionally biased stretch (basic and acidic residues) spans 822–833 (RSDEKREKRHVS). Residues 878–905 (DNEDDDADSFVVGDDEPIEYEEEDEDDM) show a composition bias toward acidic residues. The span at 977–992 (TPTASSSMSSSTLSYC) shows a compositional bias: low complexity. The span at 1018–1031 (KTREENRERKRLAQ) shows a compositional bias: basic and acidic residues. The span at 1038-1054 (SETTGVRRTLRSTQDNS) shows a compositional bias: polar residues. Composition is skewed to basic and acidic residues over residues 1076–1088 (AKSS…EKQK) and 1139–1174 (NHTE…TTEE). A coiled-coil region spans residues 1142–1187 (EMLDKRNKESEEKRRKDRDELERLRNKKHTTEEEKIKMARLQNALK). An Exonuclease domain is found at 1477–1637 (RVYALDCEMV…IFYGLRNPES (161 aa)).

This sequence belongs to the REXO1/REXO3 family. In terms of tissue distribution, expressed in the excretory canal, vulval cells, the intestine and in head and tail neurons including ASH, RIC and AIZ neurons.

The protein localises to the nucleus. Its function is as follows. Putative RNA exonuclease which protects neurons from the toxic effects of expanded poly-Q disease proteins. It is unknown whether this is via participation in the pathogenic mechanism underlying poly-Q-induced neurodegeneration or if it is by acting as a genetic modifier of the age of onset or progression of neurodegeneration. Regulates gene expression in neurons. The chain is Putative RNA exonuclease pqe-1 from Caenorhabditis elegans.